The following is a 479-amino-acid chain: 5-hydroxytryptamine receptor 7 (479 aa).

Residues 1–83 (MMDVNSSGRP…INYGRVEKVV (83 aa)) are Extracellular-facing. N-linked (GlcNAc...) asparagine glycosylation is found at N5 and N66. Residues 84-108 (IGSILTLITLLTIAGNCLVVISVCF) form a helical membrane-spanning segment. Residues 109-118 (VKKLRQPSNY) are Cytoplasmic-facing. A helical transmembrane segment spans residues 119–140 (LIVSLALADLSVAVAVMPFVSV). Residues 141–152 (TDLIGGKWIFGH) lie on the Extracellular side of the membrane. A helical transmembrane segment spans residues 153-178 (FFCNVFIAMDVMCCTASIMTLCVISI). C155 and C231 form a disulfide bridge. Residue D162 coordinates serotonin. Residues 179–198 (DRYLGITRPLTYPVRQNGKC) lie on the Cytoplasmic side of the membrane. Residues 199–219 (MAKMILSVWLLSASITLPPLF) traverse the membrane as a helical segment. Residues 220-237 (GWAQNVNDDKVCLISQDF) are Extracellular-facing. The chain crosses the membrane as a helical span at residues 238 to 260 (GYTIYSTAVAFYIPMSVMLFMYY). Topologically, residues 261–326 (QIYKAARKSA…SIFKREQKAA (66 aa)) are cytoplasmic. The chain crosses the membrane as a helical span at residues 327 to 352 (TTLGIIVGAFTVCWLPFFLLSTARPF). Residues 353-363 (ICGTSCSCIPL) are Extracellular-facing. A helical membrane pass occupies residues 364 to 387 (WVERTFLWLGYANSLINPFIYAFF). Over 388 to 479 (NRDLRTTYRS…TVEKKVMIHD (92 aa)) the chain is Cytoplasmic. C401 carries S-palmitoyl cysteine lipidation.

It belongs to the G-protein coupled receptor 1 family. Predominant isoform in spleen, caudate and hippocampus. In terms of tissue distribution, expressed at lower levels. As to expression, minor isoform in terms of expression.

It localises to the cell membrane. G-protein coupled receptor for 5-hydroxytryptamine (serotonin), a biogenic hormone that functions as a neurotransmitter, a hormone and a mitogen. Ligand binding causes a conformation change that triggers signaling via guanine nucleotide-binding proteins (G proteins) and modulates the activity of downstream effectors. HTR7 is coupled to G(s) G alpha proteins and mediates activation of adenylate cyclase activity. The polypeptide is 5-hydroxytryptamine receptor 7 (Homo sapiens (Human)).